Here is an 831-residue protein sequence, read N- to C-terminus: Leucine--tRNA ligase (831 aa).

Residues 36–46 (PYPSGKLHIGH) carry the 'HIGH' region motif. The 'KMSKS' region signature appears at 607-611 (KMSKS). Lys610 contributes to the ATP binding site.

It belongs to the class-I aminoacyl-tRNA synthetase family.

The protein resides in the cytoplasm. It catalyses the reaction tRNA(Leu) + L-leucine + ATP = L-leucyl-tRNA(Leu) + AMP + diphosphate. The sequence is that of Leucine--tRNA ligase from Neorickettsia sennetsu (strain ATCC VR-367 / Miyayama) (Ehrlichia sennetsu).